A 415-amino-acid polypeptide reads, in one-letter code: Transcriptional regulator fogI (415 aa).

The zn(2)-C6 fungal-type DNA-binding region spans 12-39 (CNACNESKVRCSQTKPTCARCERNKTTC). The disordered stretch occupies residues 50–153 (DAPPISLSHS…ILSPANLDLP (104 aa)). Composition is skewed to low complexity over residues 80–102 (VHIPNATATANATTTANYTSTTT) and 123–135 (QFFAQQQPHHQQP).

Its subcellular location is the nucleus. In terms of biological role, transcriptional regulator that postively regulates the expression of the gene cluster that mediates the biosynthesis of flavoglaucin and congeners (including aspergin, dihydroauroglaucin and auroglaucin), prenylated salicylaldehyde derivatives carrying a saturated or an unsaturated C-7 side chain. The chain is Transcriptional regulator fogI from Aspergillus ruber (strain CBS 135680).